Reading from the N-terminus, the 383-residue chain is Putative F-box protein At4g09190 (383 aa).

The F-box domain maps to 16–67 (RSQREHIPLDLIVEIVSSLPAKSIVRFRSVSKLWSSIITTPDFTSSVVTRSL).

In Arabidopsis thaliana (Mouse-ear cress), this protein is Putative F-box protein At4g09190.